The chain runs to 289 residues: 33 kDa chaperonin (289 aa).

2 cysteine pairs are disulfide-bonded: Cys235/Cys237 and Cys268/Cys271.

This sequence belongs to the HSP33 family. Under oxidizing conditions two disulfide bonds are formed involving the reactive cysteines. Under reducing conditions zinc is bound to the reactive cysteines and the protein is inactive.

The protein resides in the cytoplasm. In terms of biological role, redox regulated molecular chaperone. Protects both thermally unfolding and oxidatively damaged proteins from irreversible aggregation. Plays an important role in the bacterial defense system toward oxidative stress. The chain is 33 kDa chaperonin from Bacillus licheniformis (strain ATCC 14580 / DSM 13 / JCM 2505 / CCUG 7422 / NBRC 12200 / NCIMB 9375 / NCTC 10341 / NRRL NRS-1264 / Gibson 46).